A 610-amino-acid polypeptide reads, in one-letter code: DNA mismatch repair protein MutL (610 aa).

This sequence belongs to the DNA mismatch repair MutL/HexB family.

In terms of biological role, this protein is involved in the repair of mismatches in DNA. It is required for dam-dependent methyl-directed DNA mismatch repair. May act as a 'molecular matchmaker', a protein that promotes the formation of a stable complex between two or more DNA-binding proteins in an ATP-dependent manner without itself being part of a final effector complex. This Rickettsia rickettsii (strain Sheila Smith) protein is DNA mismatch repair protein MutL.